The following is a 383-amino-acid chain: Cobalt-precorrin-5B C(1)-methyltransferase (383 aa).

This sequence belongs to the CbiD family.

It carries out the reaction Co-precorrin-5B + S-adenosyl-L-methionine = Co-precorrin-6A + S-adenosyl-L-homocysteine. It functions in the pathway cofactor biosynthesis; adenosylcobalamin biosynthesis; cob(II)yrinate a,c-diamide from sirohydrochlorin (anaerobic route): step 6/10. Functionally, catalyzes the methylation of C-1 in cobalt-precorrin-5B to form cobalt-precorrin-6A. This is Cobalt-precorrin-5B C(1)-methyltransferase from Prochlorococcus marinus (strain MIT 9313).